A 170-amino-acid chain; its full sequence is Putative pre-16S rRNA nuclease (170 aa).

Belongs to the YqgF nuclease family.

The protein localises to the cytoplasm. In terms of biological role, could be a nuclease involved in processing of the 5'-end of pre-16S rRNA. This chain is Putative pre-16S rRNA nuclease, found in Synechococcus sp. (strain JA-2-3B'a(2-13)) (Cyanobacteria bacterium Yellowstone B-Prime).